A 388-amino-acid polypeptide reads, in one-letter code: Mannitol-1-phosphate 5-dehydrogenase (388 aa).

5–16 (AIQFGGGNIGRG) is an NAD(+) binding site. Lys213 is a catalytic residue.

The protein belongs to the mannitol dehydrogenase family. In terms of assembly, monomer.

It catalyses the reaction D-mannitol 1-phosphate + NAD(+) = beta-D-fructose 6-phosphate + NADH + H(+). In terms of biological role, catalyzes the NAD(H)-dependent interconversion of D-fructose 6-phosphate and D-mannitol 1-phosphate in the mannitol metabolic pathway. This chain is Mannitol-1-phosphate 5-dehydrogenase (mpdA), found in Neosartorya fischeri (strain ATCC 1020 / DSM 3700 / CBS 544.65 / FGSC A1164 / JCM 1740 / NRRL 181 / WB 181) (Aspergillus fischerianus).